The sequence spans 216 residues: MRDQILSLALLLCVLHSACGLYFHISETERKCFIEEVPDETTVIVNYKVELYDPRSNGFMPSSPGIGMHVEVRDSDDKVVLSRVYSSQGRISFTSHTPGEHIICMYSNSTAWFSGAQLRVHLDIQVGEHAIDYANVAQKEKLTELQLRIRQLLDQVEQITKEQNYQRYREERFRHTSESTNSRVLWWSLAQTVVLVCMGFWQMRHLKSFFEAKKLV.

The signal sequence occupies residues 1–20 (MRDQILSLALLLCVLHSACG). Residues 21–182 (LYFHISETER…FRHTSESTNS (162 aa)) lie on the Lumenal side of the membrane. The GOLD domain maps to 30-126 (RKCFIEEVPD…QLRVHLDIQV (97 aa)). Residues 134–164 (ANVAQKEKLTELQLRIRQLLDQVEQITKEQN) adopt a coiled-coil conformation. A helical membrane pass occupies residues 183-203 (RVLWWSLAQTVVLVCMGFWQM). Over 204–216 (RHLKSFFEAKKLV) the chain is Cytoplasmic. Positions 213 to 216 (KKLV) match the Prevents secretion from ER motif.

The protein belongs to the EMP24/GP25L family.

It localises to the endoplasmic reticulum membrane. Functionally, eca and bai are essential, though not redundant, for dorsoventral patterning of the embryo. Specifically required during early embryogenesis for the activity of maternal tkv, while the zygotic tkv is not affected. Involved in Golgi organization. The polypeptide is Transmembrane emp24 domain-containing protein eca (Drosophila ananassae (Fruit fly)).